The following is a 307-amino-acid chain: UDP-3-O-acyl-N-acetylglucosamine deacetylase (307 aa).

Zn(2+) contacts are provided by histidine 78, histidine 241, and aspartate 245. Histidine 268 acts as the Proton donor in catalysis.

It belongs to the LpxC family. It depends on Zn(2+) as a cofactor.

It carries out the reaction a UDP-3-O-[(3R)-3-hydroxyacyl]-N-acetyl-alpha-D-glucosamine + H2O = a UDP-3-O-[(3R)-3-hydroxyacyl]-alpha-D-glucosamine + acetate. Its pathway is glycolipid biosynthesis; lipid IV(A) biosynthesis; lipid IV(A) from (3R)-3-hydroxytetradecanoyl-[acyl-carrier-protein] and UDP-N-acetyl-alpha-D-glucosamine: step 2/6. Catalyzes the hydrolysis of UDP-3-O-myristoyl-N-acetylglucosamine to form UDP-3-O-myristoylglucosamine and acetate, the committed step in lipid A biosynthesis. In Polaromonas naphthalenivorans (strain CJ2), this protein is UDP-3-O-acyl-N-acetylglucosamine deacetylase.